The primary structure comprises 500 residues: Organic cation/carnitine transporter 7 (500 aa).

Residues 1–23 (MADGNTRFTVDEALVAMGFGKFQ) lie on the Cytoplasmic side of the membrane. Residues 24–44 (IYVLAYAGMGWVAEAMEMMLL) form a helical membrane-spanning segment. Over 45–62 (SFVGPAVQSLWNLSARQE) the chain is Extracellular. N-linked (GlcNAc...) asparagine glycosylation is present at N56. A helical transmembrane segment spans residues 63–83 (SLITSVVFAGMLIGAYSWGIV). At 84-97 (SDKHGRRKGFIITA) the chain is on the cytoplasmic side. The chain crosses the membrane as a helical span at residues 98–118 (VVTFVAGFLSAFSPNYMWLII). At 119–120 (LR) the chain is on the extracellular side. The helical transmembrane segment at 121–141 (CLVGLGLGGGPVLASWYLEFI) threads the bilayer. Position 137-144 (137-144 (YLEFIPAP)) interacts with ATP. Residues 142–150 (PAPSRGTWM) are Cytoplasmic-facing. A helical transmembrane segment spans residues 151-171 (VVFSAFWTVGTIFEASLAWLV). The Extracellular segment spans residues 172 to 174 (MPR). The chain crosses the membrane as a helical span at residues 175-195 (LGWRWLLAFSSVPSSLLLLFY). The Cytoplasmic portion of the chain corresponds to 196–293 (RWTSESPRYL…ALLSPTLMKR (98 aa)). A helical membrane pass occupies residues 294–314 (TLLLWVVFFGNAFAYYGVVLL). Topologically, residues 315–341 (TTELNNSHNRCYPTEKQLRNSNDVNYR) are extracellular. A glycan (N-linked (GlcNAc...) asparagine) is linked at N319. A helical membrane pass occupies residues 342–362 (DVFIASFAEFPGLLISAAMVD). At 363 to 367 (RLGRK) the chain is on the cytoplasmic side. Residues 368-387 (ASMASMLFTCCIFLLPLLSH) form a helical membrane-spanning segment. Topologically, residues 388–401 (QSPFITTVLLFGGR) are extracellular. The chain crosses the membrane as a helical span at residues 402–422 (ICISAAFTVVYIYAPEIYPTA). At 423-429 (VRTTGVG) the chain is on the cytoplasmic side. A helical membrane pass occupies residues 430–450 (VGSSVGRIGGILCPLVAVGLV). The Extracellular portion of the chain corresponds to 451–456 (HGCHQT). A helical transmembrane segment spans residues 457 to 477 (IAVLLFEVVILVSGICVCLFP). Topologically, residues 478–500 (FETSGRDLTDSISASKEPPSASV) are cytoplasmic.

Belongs to the major facilitator (TC 2.A.1) superfamily. Organic cation transporter (TC 2.A.1.19) family. In terms of tissue distribution, expressed in pollen.

Its subcellular location is the membrane. In terms of biological role, high affinity carnitine transporter involved in the active cellular uptake of carnitine. Also transports organic cations. The chain is Organic cation/carnitine transporter 7 (OCT7) from Arabidopsis thaliana (Mouse-ear cress).